The primary structure comprises 159 residues: Insertion element IS136 uncharacterized 16.9 kDa protein (159 aa).

Positions 126 to 142 (RSFVSPSSSTPSTARSS) are enriched in low complexity. Residues 126 to 159 (RSFVSPSSSTPSTARSSPGRPLPMQAFPAQTCAT) are disordered.

In Agrobacterium tumefaciens (strain T37), this protein is Insertion element IS136 uncharacterized 16.9 kDa protein.